A 458-amino-acid chain; its full sequence is UDP-N-acetylmuramoylalanine--D-glutamate ligase (458 aa).

124–130 provides a ligand contact to ATP; it reads GSDGKTT.

This sequence belongs to the MurCDEF family.

It localises to the cytoplasm. The enzyme catalyses UDP-N-acetyl-alpha-D-muramoyl-L-alanine + D-glutamate + ATP = UDP-N-acetyl-alpha-D-muramoyl-L-alanyl-D-glutamate + ADP + phosphate + H(+). Its pathway is cell wall biogenesis; peptidoglycan biosynthesis. Functionally, cell wall formation. Catalyzes the addition of glutamate to the nucleotide precursor UDP-N-acetylmuramoyl-L-alanine (UMA). The sequence is that of UDP-N-acetylmuramoylalanine--D-glutamate ligase from Clostridium botulinum (strain Kyoto / Type A2).